Here is an 849-residue protein sequence, read N- to C-terminus: Aminopeptidase N (849 aa).

Residues E122 and 259-263 (GAMEN) contribute to the substrate site. H294 serves as a coordination point for Zn(2+). The active-site Proton acceptor is the E295. 2 residues coordinate Zn(2+): H298 and E317.

Belongs to the peptidase M1 family. As to quaternary structure, monomer. The cofactor is Zn(2+).

It localises to the cytoplasm. It catalyses the reaction Release of an N-terminal amino acid, Xaa-|-Yaa- from a peptide, amide or arylamide. Xaa is preferably Ala, but may be most amino acids including Pro (slow action). When a terminal hydrophobic residue is followed by a prolyl residue, the two may be released as an intact Xaa-Pro dipeptide.. In terms of biological role, aminopeptidase with broad substrate specificity to several peptides. It has more affinity for oligopeptides than for dipeptides. It plays an essential role in the metabolism, it may be involved in nitrogen supply or protein turnover. In Lactococcus lactis subsp. lactis (Streptococcus lactis), this protein is Aminopeptidase N (pepN).